A 471-amino-acid polypeptide reads, in one-letter code: Thiohydroximate-O-sulfate sulfur/sulfate-lyase (nitrile-forming) NSP2 (471 aa).

Residues 2-144 form the Jacalin-type lectin domain; it reads VQKVEARGGE…LHSLGAYISS (143 aa). 6 Kelch repeats span residues 178-226, 231-277, 281-330, 332-379, 381-435, and 446-471; these read KIFS…VRMV, SLYV…SMTA, NVYV…VVQG, VWVV…VVGK, ILVF…GWSA, and GLVMFGGKAQTNDRFGDLFFYGVDSA. The active-site Proton donor is the R238. Positions 238, 271, 293, 322, and 371 each coordinate a (Z)-N-(sulfonatooxy)alkanimidothioate. R293 serves as the catalytic Proton donor. Residues E387, D391, and H395 each coordinate Fe(2+). W433 contributes to the a (Z)-N-(sulfonatooxy)alkanimidothioate binding site.

Belongs to the jacalin lectin family. Fe(2+) is required as a cofactor. In terms of tissue distribution, expressed only in seeds.

The catalysed reaction is a (Z)-N-(sulfonatooxy)alkanimidothioate = a nitrile + sulfur + sulfate. It catalyses the reaction (Z)-phenyl-N-(sulfonatooxy)methanimidothioate = phenylacetonitrile + sulfur + sulfate. The enzyme catalyses (Z)-N-(sulfonatooxy)prop-2-enimidothioate = but-3-enenitrile + sulfur + sulfate. It carries out the reaction (Z)-(indol-3-yl)-N-(sulfonatooxy)methanimidothioate = (indol-3-yl)acetonitrile + sulfur + sulfate. The presence of Fe(2+) supports lyase activity in a dose-dependent manner with both benzylglucosinolate and 2-propenylglucosinolate as substrates. More active at pH 7.4 than at pH 6. Specifier protein responsible for constitutive and herbivore-induced simple nitrile formation, especially in seeds. Promotes simple nitriles, but not epithionitrile or thiocyanate formation. Converts allylglucosinolate (allyl-GSL), 2-propenylglucosinolate (sinigrin), indol-3-ylmethylglucosinolate (glucobrassicin), benzylisothiocyanate and benzylglucosinolate (glucotropaeolin) to their corresponding simple nitriles in the presence of myrosinase. Catalyzes mainly the conversion of benzylisothiocyanate when benzylglucosinolate is used as the initial substrate of myrosinase. Involved in the regulation of glucosinolate content in seeds, during stratification and germination. In Arabidopsis thaliana (Mouse-ear cress), this protein is Thiohydroximate-O-sulfate sulfur/sulfate-lyase (nitrile-forming) NSP2.